The chain runs to 577 residues: Arginine--tRNA ligase (577 aa).

Positions 122–132 (PNVAKEMHVGH) match the 'HIGH' region motif.

It belongs to the class-I aminoacyl-tRNA synthetase family. Monomer.

It is found in the cytoplasm. The catalysed reaction is tRNA(Arg) + L-arginine + ATP = L-arginyl-tRNA(Arg) + AMP + diphosphate. This chain is Arginine--tRNA ligase, found in Aliivibrio salmonicida (strain LFI1238) (Vibrio salmonicida (strain LFI1238)).